The following is an 83-amino-acid chain: Large ribosomal subunit protein bL31B (83 aa).

It belongs to the bacterial ribosomal protein bL31 family. Type B subfamily. Part of the 50S ribosomal subunit.

Functionally, binds the 23S rRNA. The protein is Large ribosomal subunit protein bL31B of Lactobacillus delbrueckii subsp. bulgaricus (strain ATCC 11842 / DSM 20081 / BCRC 10696 / JCM 1002 / NBRC 13953 / NCIMB 11778 / NCTC 12712 / WDCM 00102 / Lb 14).